The following is a 404-amino-acid chain: Keratin, type I cuticular Ha3-I (404 aa).

Residues 1–56 (MSYSCGLPNLSCRTSCSSRPCVPPSCHGCTLPGACNIPANVSNCNWFCEGSFNGSE) form a head region. In terms of domain architecture, IF rod spans 56–367 (EKETMQFLND…SLLESEDCKL (312 aa)). Residues 57-91 (KETMQFLNDRLASYLEKVRQLERDNAELENLIRER) are coil 1A. Positions 92–102 (SQQQEPLVCAS) are linker 1. Residues 103 to 203 (YQSYFKTIEE…HEQEVNTLRC (101 aa)) are coil 1B. The interval 204-219 (QLGGRLNVEVDAAPAV) is linker 12. The segment at 220–363 (DLNQVLNETR…NTYRSLLESE (144 aa)) is coil 2. Residues 364–404 (DCKLPSNPCAITNACDKSTGPCISNPCGPRARCGPCNTFGY) are tail.

This sequence belongs to the intermediate filament family.

This is Keratin, type I cuticular Ha3-I from Pan troglodytes (Chimpanzee).